A 117-amino-acid chain; its full sequence is Protein GL2-INTERACTING REPRESSOR 2 (117 aa).

Positions 1–56 (MSRRNKNGPKLELRLNLSPPPSQASQMSLVRSPNRSNTTSPSSCVSSETNQEENET) are disordered. The EAR motif lies at 10–15 (KLELRL). The segment covering 31 to 49 (RSPNRSNTTSPSSCVSSET) has biased composition (low complexity).

As to quaternary structure, interacts with GL2. Interacts with TPL.

Its subcellular location is the nucleus. Acts as a negative regulator of root hair development redundantly with GIR1. GIR1 and GIR2 may function as adapter proteins that associate with GL2 and participate in the control of root hair formation. GIR1 and GIR2 may function as adapter proteins that associate with TPL and participate in the repression of root gene expression. The chain is Protein GL2-INTERACTING REPRESSOR 2 from Arabidopsis thaliana (Mouse-ear cress).